Reading from the N-terminus, the 173-residue chain is Dual-action ribosomal maturation protein DarP (173 aa).

Belongs to the DarP family.

It localises to the cytoplasm. Member of a network of 50S ribosomal subunit biogenesis factors which assembles along the 30S-50S interface, preventing incorrect 23S rRNA structures from forming. Promotes peptidyl transferase center (PTC) maturation. In Pseudomonas fluorescens (strain ATCC BAA-477 / NRRL B-23932 / Pf-5), this protein is Dual-action ribosomal maturation protein DarP.